A 516-amino-acid polypeptide reads, in one-letter code: 2-isopropylmalate synthase (516 aa).

In terms of domain architecture, Pyruvate carboxyltransferase spans 5 to 267 (VIIFDTTLRD…STNIVHKEIY (263 aa)). The Mn(2+) site is built by Asp-14, His-202, His-204, and Asn-238. The interval 392–516 (YLKFFSVQSI…NKKLKNLKKY (125 aa)) is regulatory domain.

The protein belongs to the alpha-IPM synthase/homocitrate synthase family. LeuA type 1 subfamily. In terms of assembly, homodimer. Mn(2+) serves as cofactor.

Its subcellular location is the cytoplasm. The catalysed reaction is 3-methyl-2-oxobutanoate + acetyl-CoA + H2O = (2S)-2-isopropylmalate + CoA + H(+). The protein operates within amino-acid biosynthesis; L-leucine biosynthesis; L-leucine from 3-methyl-2-oxobutanoate: step 1/4. Functionally, catalyzes the condensation of the acetyl group of acetyl-CoA with 3-methyl-2-oxobutanoate (2-ketoisovalerate) to form 3-carboxy-3-hydroxy-4-methylpentanoate (2-isopropylmalate). The chain is 2-isopropylmalate synthase from Buchnera aphidicola subsp. Diuraphis noxia.